The chain runs to 277 residues: uncharacterized protein (277 aa).

Transmembrane regions (helical) follow at residues 37-59 (YLRY…LYIW), 63-82 (LIFG…PKVI), 214-236 (MLCG…KTYI), and 246-268 (WITS…TYLF).

The protein localises to the cell membrane. This is an uncharacterized protein from Bacillus anthracis.